The following is a 299-amino-acid chain: Tyrosine recombinase XerC (299 aa).

In terms of domain architecture, Core-binding (CB) spans 1 to 85; the sequence is MERQLEAYCA…AVRGLYRYLN (85 aa). The Tyr recombinase domain maps to 106–285; that stretch reads RLPKTLDTDR…DFQHLAAVYD (180 aa). Active-site residues include arginine 146, lysine 170, histidine 237, arginine 240, and histidine 263. Tyrosine 272 functions as the O-(3'-phospho-DNA)-tyrosine intermediate in the catalytic mechanism.

The protein belongs to the 'phage' integrase family. XerC subfamily. Forms a cyclic heterotetrameric complex composed of two molecules of XerC and two molecules of XerD.

It is found in the cytoplasm. Functionally, site-specific tyrosine recombinase, which acts by catalyzing the cutting and rejoining of the recombining DNA molecules. The XerC-XerD complex is essential to convert dimers of the bacterial chromosome into monomers to permit their segregation at cell division. It also contributes to the segregational stability of plasmids. The sequence is that of Tyrosine recombinase XerC from Pseudomonas entomophila (strain L48).